The sequence spans 313 residues: Methionyl-tRNA formyltransferase (313 aa).

A (6S)-5,6,7,8-tetrahydrofolate-binding site is contributed by 109–112 (SLLP).

This sequence belongs to the Fmt family.

It carries out the reaction L-methionyl-tRNA(fMet) + (6R)-10-formyltetrahydrofolate = N-formyl-L-methionyl-tRNA(fMet) + (6S)-5,6,7,8-tetrahydrofolate + H(+). In terms of biological role, attaches a formyl group to the free amino group of methionyl-tRNA(fMet). The formyl group appears to play a dual role in the initiator identity of N-formylmethionyl-tRNA by promoting its recognition by IF2 and preventing the misappropriation of this tRNA by the elongation apparatus. The chain is Methionyl-tRNA formyltransferase from Thermotoga maritima (strain ATCC 43589 / DSM 3109 / JCM 10099 / NBRC 100826 / MSB8).